A 215-amino-acid polypeptide reads, in one-letter code: Orotate phosphoribosyltransferase (215 aa).

Lys26 lines the 5-phospho-alpha-D-ribose 1-diphosphate pocket. 34–35 (FF) is a binding site for orotate. Residues 72-73 (YK), Arg99, Lys100, Lys103, His105, and 124-132 (DDVITAGTA) contribute to the 5-phospho-alpha-D-ribose 1-diphosphate site. Residues Thr128 and Arg156 each coordinate orotate.

The protein belongs to the purine/pyrimidine phosphoribosyltransferase family. PyrE subfamily. As to quaternary structure, homodimer. Mg(2+) is required as a cofactor.

The catalysed reaction is orotidine 5'-phosphate + diphosphate = orotate + 5-phospho-alpha-D-ribose 1-diphosphate. It functions in the pathway pyrimidine metabolism; UMP biosynthesis via de novo pathway; UMP from orotate: step 1/2. Its function is as follows. Catalyzes the transfer of a ribosyl phosphate group from 5-phosphoribose 1-diphosphate to orotate, leading to the formation of orotidine monophosphate (OMP). The sequence is that of Orotate phosphoribosyltransferase from Yersinia pseudotuberculosis serotype O:1b (strain IP 31758).